Reading from the N-terminus, the 316-residue chain is Porphobilinogen deaminase (316 aa).

Cys-245 carries the S-(dipyrrolylmethanemethyl)cysteine modification.

It belongs to the HMBS family. In terms of assembly, monomer. Dipyrromethane serves as cofactor.

It catalyses the reaction 4 porphobilinogen + H2O = hydroxymethylbilane + 4 NH4(+). It functions in the pathway porphyrin-containing compound metabolism; protoporphyrin-IX biosynthesis; coproporphyrinogen-III from 5-aminolevulinate: step 2/4. Its pathway is porphyrin-containing compound metabolism; chlorophyll biosynthesis. In terms of biological role, tetrapolymerization of the monopyrrole PBG into the hydroxymethylbilane pre-uroporphyrinogen in several discrete steps. This chain is Porphobilinogen deaminase, found in Prochlorococcus marinus (strain MIT 9515).